The primary structure comprises 195 residues: Probable chemoreceptor glutamine deamidase CheD 2 (195 aa).

This sequence belongs to the CheD family.

It carries out the reaction L-glutaminyl-[protein] + H2O = L-glutamyl-[protein] + NH4(+). Probably deamidates glutamine residues to glutamate on methyl-accepting chemotaxis receptors (MCPs), playing an important role in chemotaxis. The polypeptide is Probable chemoreceptor glutamine deamidase CheD 2 (Burkholderia thailandensis (strain ATCC 700388 / DSM 13276 / CCUG 48851 / CIP 106301 / E264)).